The following is a 269-amino-acid chain: Thiazole synthase (269 aa).

Residue K109 is the Schiff-base intermediate with DXP of the active site. Residues G170, 196–197 (AG), and 218–219 (NT) contribute to the 1-deoxy-D-xylulose 5-phosphate site.

The protein belongs to the ThiG family. Homotetramer. Forms heterodimers with either ThiH or ThiS.

The protein resides in the plastid. It is found in the chloroplast. The catalysed reaction is [ThiS sulfur-carrier protein]-C-terminal-Gly-aminoethanethioate + 2-iminoacetate + 1-deoxy-D-xylulose 5-phosphate = [ThiS sulfur-carrier protein]-C-terminal Gly-Gly + 2-[(2R,5Z)-2-carboxy-4-methylthiazol-5(2H)-ylidene]ethyl phosphate + 2 H2O + H(+). It functions in the pathway cofactor biosynthesis; thiamine diphosphate biosynthesis. Functionally, catalyzes the rearrangement of 1-deoxy-D-xylulose 5-phosphate (DXP) to produce the thiazole phosphate moiety of thiamine. Sulfur is provided by the thiocarboxylate moiety of the carrier protein ThiS. In vitro, sulfur can be provided by H(2)S. The protein is Thiazole synthase of Phaeodactylum tricornutum (strain CCAP 1055/1).